The chain runs to 159 residues: Ribosomal RNA large subunit methyltransferase H (159 aa).

S-adenosyl-L-methionine contacts are provided by residues leucine 76, glycine 108, and 127 to 132; that span reads FSKMTL.

The protein belongs to the RNA methyltransferase RlmH family. In terms of assembly, homodimer.

It is found in the cytoplasm. The catalysed reaction is pseudouridine(1915) in 23S rRNA + S-adenosyl-L-methionine = N(3)-methylpseudouridine(1915) in 23S rRNA + S-adenosyl-L-homocysteine + H(+). Functionally, specifically methylates the pseudouridine at position 1915 (m3Psi1915) in 23S rRNA. The protein is Ribosomal RNA large subunit methyltransferase H of Bacillus thuringiensis subsp. konkukian (strain 97-27).